The following is a 302-amino-acid chain: Oxygen-dependent coproporphyrinogen-III oxidase (302 aa).

Ser94 is a substrate binding site. His98 and His108 together coordinate a divalent metal cation. Catalysis depends on His108, which acts as the Proton donor. Position 110 to 112 (110 to 112 (NVR)) interacts with substrate. A divalent metal cation-binding residues include His147 and His177. Positions 242-277 (YVEFNLVYDRGTLFGLQTGGRTESILMSMPPLARWE) are important for dimerization. A substrate-binding site is contributed by 260 to 262 (GGR).

Belongs to the aerobic coproporphyrinogen-III oxidase family. Homodimer. Requires a divalent metal cation as cofactor.

The protein localises to the cytoplasm. The catalysed reaction is coproporphyrinogen III + O2 + 2 H(+) = protoporphyrinogen IX + 2 CO2 + 2 H2O. It participates in porphyrin-containing compound metabolism; protoporphyrin-IX biosynthesis; protoporphyrinogen-IX from coproporphyrinogen-III (O2 route): step 1/1. Its function is as follows. Involved in the heme biosynthesis. Catalyzes the aerobic oxidative decarboxylation of propionate groups of rings A and B of coproporphyrinogen-III to yield the vinyl groups in protoporphyrinogen-IX. The sequence is that of Oxygen-dependent coproporphyrinogen-III oxidase from Aeromonas salmonicida (strain A449).